A 246-amino-acid polypeptide reads, in one-letter code: tRNA pseudouridine synthase A (246 aa).

Catalysis depends on aspartate 52, which acts as the Nucleophile. Tyrosine 111 contributes to the substrate binding site.

The protein belongs to the tRNA pseudouridine synthase TruA family. Homodimer.

The enzyme catalyses uridine(38/39/40) in tRNA = pseudouridine(38/39/40) in tRNA. Its function is as follows. Formation of pseudouridine at positions 38, 39 and 40 in the anticodon stem and loop of transfer RNAs. The chain is tRNA pseudouridine synthase A from Borreliella afzelii (strain PKo) (Borrelia afzelii).